Here is a 102-residue protein sequence, read N- to C-terminus: Large ribosomal subunit protein bL21 (102 aa).

Belongs to the bacterial ribosomal protein bL21 family. As to quaternary structure, part of the 50S ribosomal subunit. Contacts protein L20.

In terms of biological role, this protein binds to 23S rRNA in the presence of protein L20. This chain is Large ribosomal subunit protein bL21, found in Pseudarthrobacter chlorophenolicus (strain ATCC 700700 / DSM 12829 / CIP 107037 / JCM 12360 / KCTC 9906 / NCIMB 13794 / A6) (Arthrobacter chlorophenolicus).